The chain runs to 221 residues: Eukaryotic translation initiation factor 3 subunit K (221 aa).

The PCI domain occupies 46-215 (YDLEANLACL…EKIEFDNLAP (170 aa)).

The protein belongs to the eIF-3 subunit K family. As to quaternary structure, component of the eukaryotic translation initiation factor 3 (eIF-3) complex.

It localises to the cytoplasm. Functionally, component of the eukaryotic translation initiation factor 3 (eIF-3) complex, which is involved in protein synthesis of a specialized repertoire of mRNAs and, together with other initiation factors, stimulates binding of mRNA and methionyl-tRNAi to the 40S ribosome. The eIF-3 complex specifically targets and initiates translation of a subset of mRNAs involved in cell proliferation. This is Eukaryotic translation initiation factor 3 subunit K from Anopheles gambiae (African malaria mosquito).